The sequence spans 300 residues: tRNA pseudouridine synthase B (300 aa).

The active-site Nucleophile is aspartate 41.

The protein belongs to the pseudouridine synthase TruB family. Type 1 subfamily.

The catalysed reaction is uridine(55) in tRNA = pseudouridine(55) in tRNA. Responsible for synthesis of pseudouridine from uracil-55 in the psi GC loop of transfer RNAs. This chain is tRNA pseudouridine synthase B, found in Synechococcus sp. (strain WH7803).